The chain runs to 373 residues: LIM domain-binding protein 2 (373 aa).

Disordered stretches follow at residues 244-287 and 327-373; these read APPA…KTPA and QYDA…QASQ. The segment covering 263 to 280 has biased composition (low complexity); the sequence is STSSTSNSSAGNTTNSAG. An LIM interaction domain (LID) domain is found at 298–337; the sequence is DVMVVGEPTLMGGEFGDEDERLITRLENTQYDAANGMDDE. Residues 341-373 are compositionally biased toward polar residues; that stretch reads NNSPALGNNSPWNSKPPATQETKSENAPPQASQ.

Belongs to the LDB family. As to quaternary structure, interacts with LHX9. Interacts with SLK; leading to negatively regulate SLK kinase activity. Interacts with LMO4. In terms of assembly, interacts with PITX1. Interacts with LHX3. Ubiquitinated by RLIM/RNF12, leading to its degradation by the proteasome. In terms of tissue distribution, expressed in multiple tissues including heart, brain, liver, kidney, testis, lung and muscle, with expression highest in the brain, trigeminal ganglia, and lung.

Its subcellular location is the nucleus. Transcription cofactor. Binds to the LIM domain of a wide variety of LIM domain-containing transcription factors. Its function is as follows. Regulates the transcriptional activity of LIM-containing proteins such as LHX3 or PITX1. In Mus musculus (Mouse), this protein is LIM domain-binding protein 2 (Ldb2).